Consider the following 579-residue polypeptide: MFS-type transporter olcL (579 aa).

Residues methionine 1–threonine 24 are compositionally biased toward polar residues. Residues methionine 1–aspartate 75 are disordered. Basic and acidic residues predominate over residues valine 25–threonine 35. The span at serine 36–glutamine 54 shows a compositional bias: polar residues. A glycan (N-linked (GlcNAc...) asparagine) is linked at asparagine 45. A run of 9 helical transmembrane segments spans residues leucine 85–isoleucine 105, glycine 121–phenylalanine 141, alanine 159–isoleucine 179, isoleucine 183–valine 203, leucine 214–threonine 234, tryptophan 241–phenylalanine 261, leucine 282–glycine 302, serine 310–valine 330, and leucine 355–phenylalanine 375. A glycan (N-linked (GlcNAc...) asparagine) is linked at asparagine 380. Transmembrane regions (helical) follow at residues leucine 388–valine 408, isoleucine 411–leucine 431, phenylalanine 439–leucine 459, isoleucine 479–phenylalanine 501, and phenylalanine 553–isoleucine 573.

Belongs to the major facilitator superfamily. TCR/Tet family.

It is found in the peroxisome membrane. Functionally, MFS-type transporter; part of the gene cluster that mediates the biosynthesis of 15-deoxyoxalicine B. The first step of the pathway is the synthesis of nicotinyl-CoA from nicotinic acid by the nicotinic acid-CoA ligase olcI. Nicotinyl-CoA is then a substrate of polyketide synthase olcA to produce 4-hydroxy-6-(3-pyridinyl)-2H-pyran-2-one (HPPO) which is further prenylated by the polyprenyl transferase olcH to yield geranylgeranyl-HPPO. Geranylgeranyl pyrophosphate is provided by the cluster-specific geranylgeranyl pyrophosphate synthase olcC. The FAD-dependent monooxygenase olcE catalyzes the epoxidation of geranylgeranyl-HPPO and the terpene cyclase olcD catalyzes the cyclization of the terpenoid component, resulting in the formation of the tricyclic terpene moiety seen in predecaturin E. The cytochrome P450 monooxygenase then catalyzes the allylic oxidation of predecaturin E, which is followed by spirocylization with concomitant loss of one molecule of water to form decaturin E. Decaturin E is the substrate of the cytochrome P450 monooxygenase olcJ which hydroxylates it at the C-29 position to form decaturin F. The short-chain dehydrogenase/reductase olcF may catalyze the oxidation of decaturin F to generate the 29-hydroxyl-27-one intermediate, and subsequent hemiacetal formation probably leads to the formation of decaturin C. The dioxygenase olcK may be a peroxisomal enzyme that catalyzes the hydroxylation of decaturin C into decaturin A once decaturin C is shuttled into the peroxisome by the MFS transporter olcL. Finally the cytochrome P450 monooxygenase olcB catalyzes the oxidative rearrangement to yield 15-deoxyoxalicine B. In the absence of olcJ, decaturin E may be shunted to a pathway in which it is oxidized to a ketone, possibly by olcF, to form decaturin D, which undergoes further allylic oxidation to yield decaturin G. Moreover, in the absence of oclK or oclL, oclB can convert decaturin C into 15-deoxyoxalicine A. This chain is MFS-type transporter olcL, found in Penicillium canescens.